A 297-amino-acid polypeptide reads, in one-letter code: Protein phosphatase PTC7 homolog (297 aa).

The N-terminal 27 residues, 1 to 27 (MLSVLSYGRLVARAVIGGLSQTDSRDY), are a transit peptide targeting the mitochondrion. A PPM-type phosphatase domain is found at 28-292 (SLVSASFGFG…DDITVLLSIV (265 aa)). Mn(2+)-binding residues include Asp71, Gly72, and Asp216.

It belongs to the PP2C family. Requires Mg(2+) as cofactor. Mn(2+) is required as a cofactor.

The protein localises to the mitochondrion matrix. The catalysed reaction is O-phospho-L-seryl-[protein] + H2O = L-seryl-[protein] + phosphate. It catalyses the reaction O-phospho-L-threonyl-[protein] + H2O = L-threonyl-[protein] + phosphate. Its function is as follows. Protein phosphatase which positively regulates biosynthesis of the ubiquinone, coenzyme Q. Dephosphorylates the ubiquinone biosynthesis protein coq7 which is likely to lead to its activation. This is Protein phosphatase PTC7 homolog (pptc7) from Danio rerio (Zebrafish).